A 153-amino-acid chain; its full sequence is Ribosome maturation factor RimP (153 aa).

This sequence belongs to the RimP family.

The protein resides in the cytoplasm. Required for maturation of 30S ribosomal subunits. This is Ribosome maturation factor RimP from Clostridium botulinum (strain Langeland / NCTC 10281 / Type F).